Here is a 275-residue protein sequence, read N- to C-terminus: Large ribosomal subunit protein uL2c (275 aa).

The segment at 223-255 (VVMNPVDHPHGGGEGRAPIGRSRPVTPWGRPAL) is disordered.

Belongs to the universal ribosomal protein uL2 family. As to quaternary structure, part of the 50S ribosomal subunit.

It is found in the plastid. The protein resides in the chloroplast. The chain is Large ribosomal subunit protein uL2c (rpl2) from Pleurastrum terricola (Filamentous green alga).